A 159-amino-acid chain; its full sequence is Transcription elongation factor A protein-like 1 (159 aa).

A disordered region spans residues 1-99 (MDKPRKENEE…CGVGKHKLEE (99 aa)). A compositionally biased stretch (basic and acidic residues) spans 17-34 (KTDEERPPVEHSPEKQSL). A compositionally biased stretch (acidic residues) spans 37 to 54 (QSSEEQSSEEEFFPEELL). Positions 64–80 (SEERPPQEGLSRKDLFE) are enriched in basic and acidic residues.

Belongs to the TFS-II family. TFA subfamily.

The protein resides in the nucleus. In terms of biological role, may be involved in transcriptional regulation. Modulates various viral and cellular promoters in a promoter context-dependent manner. Does not bind DNA directly. The chain is Transcription elongation factor A protein-like 1 from Ateles geoffroyi (Black-handed spider monkey).